Consider the following 155-residue polypeptide: Ribosomal RNA large subunit methyltransferase H (155 aa).

Residues L72, G103, and 122-127 (LSKLTM) each bind S-adenosyl-L-methionine.

This sequence belongs to the RNA methyltransferase RlmH family. As to quaternary structure, homodimer.

The protein localises to the cytoplasm. The catalysed reaction is pseudouridine(1915) in 23S rRNA + S-adenosyl-L-methionine = N(3)-methylpseudouridine(1915) in 23S rRNA + S-adenosyl-L-homocysteine + H(+). Specifically methylates the pseudouridine at position 1915 (m3Psi1915) in 23S rRNA. The sequence is that of Ribosomal RNA large subunit methyltransferase H from Methylobacillus flagellatus (strain ATCC 51484 / DSM 6875 / VKM B-1610 / KT).